The sequence spans 40 residues: Photosystem II reaction center protein J (40 aa).

Residues 8 to 28 traverse the membrane as a helical segment; it reads IPLWLIGTVTGIPVIGLIGIF.

This sequence belongs to the PsbJ family. PSII is composed of 1 copy each of membrane proteins PsbA, PsbB, PsbC, PsbD, PsbE, PsbF, PsbH, PsbI, PsbJ, PsbK, PsbL, PsbM, PsbT, PsbX, PsbY, PsbZ, Psb30/Ycf12, at least 3 peripheral proteins of the oxygen-evolving complex and a large number of cofactors. It forms dimeric complexes.

The protein localises to the plastid. The protein resides in the chloroplast thylakoid membrane. In terms of biological role, one of the components of the core complex of photosystem II (PSII). PSII is a light-driven water:plastoquinone oxidoreductase that uses light energy to abstract electrons from H(2)O, generating O(2) and a proton gradient subsequently used for ATP formation. It consists of a core antenna complex that captures photons, and an electron transfer chain that converts photonic excitation into a charge separation. This chain is Photosystem II reaction center protein J, found in Vitis vinifera (Grape).